The chain runs to 83 residues: Arminin 3a (83 aa).

The N-terminal stretch at 1–18 (MKTVFAILFLTFIALTCA) is a signal peptide. A propeptide spanning residues 19–57 (RNYEDLKEKIKNEVEREIFEDLEEESDELENNFKKFNDA) is cleaved from the precursor. A80 is subject to Alanine amide.

The protein belongs to the arminin family. Expressed in entodermal epithelium along the body column.

The protein localises to the secreted. It is found in the target cell membrane. Antimicrobial peptide with a broad-spectrum antimicrobial activity. Keeps its antibacterial activity under a wide range of salt concentrations that mimic physiological conditions of human blood, which is surprising, since Hydra is an obligate freshwater animal with nearly no salt tolerance. Does not affect red blood cells. In Hydra vulgaris (Hydra), this protein is Arminin 3a.